Here is a 149-residue protein sequence, read N- to C-terminus: Myosin light chain 1 (149 aa).

3 consecutive EF-hand domains span residues 2–37 (SATR…IGYN), 81–116 (AKTE…LGEK), and 117–149 (LTDA…VLRQ). 5 residues coordinate Ca(2+): aspartate 15, aspartate 94, threonine 98, lysine 100, and aspartate 105. Residue lysine 116 forms a Glycyl lysine isopeptide (Lys-Gly) (interchain with G-Cter in ubiquitin) linkage. Ca(2+) is bound by residues aspartate 123, lysine 127, and aspartate 132.

As to quaternary structure, interacts with MYO1, MYO2 and IQG1 by binding to their IQ domains. Interacts with SEC4.

It localises to the bud neck. It is found in the bud tip. Functionally, essential light chain for the class II conventional myosin MYO1. Also acts as light chain for the class V unconventional myosin MYO2 and for IQG1. Involved in the assembly of the contractile actomyosin ring at the bud neck during cytokinesis by recruiting IQG1 to the bud neck. Also required for chitin and MYO2-dependent secretory vesicle deposition to the center of the bud neck for septum formation. May stabilize MYO2 by binding to its IQ domains. Its major function is probably not to regulate MYO1 activity, but rather to coordinate actin ring formation and targeted membrane deposition during cytokinesis via its interactions with MYO1, IQG1 and MYO2. The chain is Myosin light chain 1 (MLC1) from Saccharomyces cerevisiae (strain ATCC 204508 / S288c) (Baker's yeast).